A 417-amino-acid chain; its full sequence is Gamma-glutamyl phosphate reductase (417 aa).

The protein belongs to the gamma-glutamyl phosphate reductase family.

The protein resides in the cytoplasm. It catalyses the reaction L-glutamate 5-semialdehyde + phosphate + NADP(+) = L-glutamyl 5-phosphate + NADPH + H(+). It functions in the pathway amino-acid biosynthesis; L-proline biosynthesis; L-glutamate 5-semialdehyde from L-glutamate: step 2/2. In terms of biological role, catalyzes the NADPH-dependent reduction of L-glutamate 5-phosphate into L-glutamate 5-semialdehyde and phosphate. The product spontaneously undergoes cyclization to form 1-pyrroline-5-carboxylate. This chain is Gamma-glutamyl phosphate reductase, found in Escherichia coli O6:H1 (strain CFT073 / ATCC 700928 / UPEC).